A 408-amino-acid chain; its full sequence is RUN domain-containing protein 3B (408 aa).

Residues 1-25 (MASRSLGGLSGSRGGGGGGGGKKSL) form a disordered region. Residues 8 to 22 (GLSGSRGGGGGGGGK) show a composition bias toward gly residues. The residue at position 13 (R13) is an Omega-N-methylarginine. In terms of domain architecture, RUN spans 58-190 (DDSSPEFNNF…IDFSFCLKGE (133 aa)). The segment at 213–238 (DSISSDEEELRTFGSSDSESSTPENV) is disordered. Residues S216 and S217 each carry the phosphoserine modification. A compositionally biased stretch (polar residues) spans 225-236 (FGSSDSESSTPE). Residues 301–326 (AHKLEKEQLEYIIVELQDQLKSYQSL) are a coiled coil. A disordered region spans residues 337-359 (QASLDPSHSQEGDGKQDSLNFIG).

The protein belongs to the RUNDC3 family. As to quaternary structure, interacts with RAP2A.

The sequence is that of RUN domain-containing protein 3B (Rundc3b) from Mus musculus (Mouse).